A 165-amino-acid chain; its full sequence is Pyruvoyl-dependent arginine decarboxylase 1 (165 aa).

Serine 45 carries the post-translational modification Pyruvic acid (Ser).

The protein belongs to the PdaD family. The cofactor is pyruvate.

The catalysed reaction is L-arginine + H(+) = agmatine + CO2. The chain is Pyruvoyl-dependent arginine decarboxylase 1 (pdaD1) from Methanosarcina mazei (strain ATCC BAA-159 / DSM 3647 / Goe1 / Go1 / JCM 11833 / OCM 88) (Methanosarcina frisia).